Here is a 179-residue protein sequence, read N- to C-terminus: Large ribosomal subunit protein uL5 (179 aa).

This sequence belongs to the universal ribosomal protein uL5 family. In terms of assembly, part of the 50S ribosomal subunit; part of the 5S rRNA/L5/L18/L25 subcomplex. Contacts the 5S rRNA and the P site tRNA. Forms a bridge to the 30S subunit in the 70S ribosome.

This is one of the proteins that bind and probably mediate the attachment of the 5S RNA into the large ribosomal subunit, where it forms part of the central protuberance. In the 70S ribosome it contacts protein S13 of the 30S subunit (bridge B1b), connecting the 2 subunits; this bridge is implicated in subunit movement. Contacts the P site tRNA; the 5S rRNA and some of its associated proteins might help stabilize positioning of ribosome-bound tRNAs. The polypeptide is Large ribosomal subunit protein uL5 (Herpetosiphon aurantiacus (strain ATCC 23779 / DSM 785 / 114-95)).